The sequence spans 351 residues: Protein Wnt-4 (351 aa).

An N-terminal signal peptide occupies residues Met-1 to Ala-22. Asn-21 and Asn-88 each carry an N-linked (GlcNAc...) asparagine glycan. Disulfide bonds link Cys-78/Cys-89, Cys-128/Cys-136, Cys-138/Cys-155, Cys-206/Cys-220, Cys-208/Cys-215, Cys-280/Cys-311, Cys-296/Cys-306, Cys-310/Cys-350, Cys-326/Cys-341, Cys-328/Cys-338, and Cys-333/Cys-334. Residue Ser-212 is the site of O-palmitoleoyl serine; by PORCN attachment. Asn-297 carries an N-linked (GlcNAc...) asparagine glycan.

This sequence belongs to the Wnt family. In terms of assembly, interacts with CPZ. Palmitoleoylation is required for efficient binding to frizzled receptors. Depalmitoleoylation leads to Wnt signaling pathway inhibition. As to expression, predominantly expressed in the diencephalon neuromere D2.

Its subcellular location is the secreted. The protein localises to the extracellular space. The protein resides in the extracellular matrix. Its function is as follows. Ligand for members of the frizzled family of seven transmembrane receptors. Plays an important role in embryonic development. The sequence is that of Protein Wnt-4 (WNT4) from Gallus gallus (Chicken).